We begin with the raw amino-acid sequence, 259 residues long: DNA repair protein RecO (259 aa).

The protein belongs to the RecO family.

Involved in DNA repair and RecF pathway recombination. This is DNA repair protein RecO from Leuconostoc mesenteroides subsp. mesenteroides (strain ATCC 8293 / DSM 20343 / BCRC 11652 / CCM 1803 / JCM 6124 / NCDO 523 / NBRC 100496 / NCIMB 8023 / NCTC 12954 / NRRL B-1118 / 37Y).